Consider the following 182-residue polypeptide: Large ribosomal subunit protein uL16 (182 aa).

This sequence belongs to the universal ribosomal protein uL16 family.

In Pyrobaculum islandicum (strain DSM 4184 / JCM 9189 / GEO3), this protein is Large ribosomal subunit protein uL16.